Here is a 162-residue protein sequence, read N- to C-terminus: Phosphopantetheine adenylyltransferase (162 aa).

A substrate-binding site is contributed by S11. ATP contacts are provided by residues 11-12 and H19; that span reads SF. Positions 43, 76, and 90 each coordinate substrate. Residues 91-93, E101, and 126-132 each bind ATP; these read GLR and HLYISSS.

Belongs to the bacterial CoaD family. In terms of assembly, homohexamer. It depends on Mg(2+) as a cofactor.

The protein localises to the cytoplasm. It carries out the reaction (R)-4'-phosphopantetheine + ATP + H(+) = 3'-dephospho-CoA + diphosphate. Its pathway is cofactor biosynthesis; coenzyme A biosynthesis; CoA from (R)-pantothenate: step 4/5. Its function is as follows. Reversibly transfers an adenylyl group from ATP to 4'-phosphopantetheine, yielding dephospho-CoA (dPCoA) and pyrophosphate. The sequence is that of Phosphopantetheine adenylyltransferase from Streptococcus pneumoniae (strain Hungary19A-6).